Reading from the N-terminus, the 289-residue chain is DNA repair protein rad14 (289 aa).

Zn(2+) is bound by residues Cys116, Cys119, Cys137, and Cys140. Residues 116–140 (CFECDSIELDTKYFDIFHCRVCHTC) fold into a zinc finger.

The protein belongs to the XPA family. As to quaternary structure, interacts with hrq1.

It is found in the nucleus. In terms of biological role, involved in nucleotide excision repair (NER). Functional in repair of ultraviolet radiation induced damages and in mitotic mutation avoidance. Binds damaged DNA. Binds specifically to base-base mismatches or small insertion/deletion loops with unpaired nucleotides. Maintains GT repeat stability. Functions as a part of the short-patch excision repair system. In Schizosaccharomyces pombe (strain 972 / ATCC 24843) (Fission yeast), this protein is DNA repair protein rad14.